A 461-amino-acid polypeptide reads, in one-letter code: Tumor necrosis factor receptor superfamily member 1A (461 aa).

An N-terminal signal peptide occupies residues 1 to 29; it reads MGLSTVPGLLLPLVLRALLVDVYPAGVHG. Topologically, residues 30–210 are extracellular; it reads LVLHPGDREK…RNDFQDTGTT (181 aa). TNFR-Cys repeat units follow at residues 43–82, 83–125, 126–166, and 167–195; these read LCPQGKYSHPQNRSICCTKCHKGTYLHNDCLGPGLDTDCR, ECDN…DTVC, GCRK…DTIC, and NCHSGFFLRDKECVSCVNCKNADCKNLCP. 7 disulfide bridges follow: Cys-44/Cys-58, Cys-59/Cys-72, Cys-62/Cys-81, Cys-84/Cys-99, Cys-102/Cys-117, Cys-105/Cys-125, and Cys-127/Cys-143. Asn-54 carries N-linked (GlcNAc...) asparagine glycosylation. N-linked (GlcNAc...) asparagine glycosylation is present at Asn-86. 2 N-linked (GlcNAc...) asparagine glycosylation sites follow: Asn-145 and Asn-151. Disulfide bonds link Cys-146–Cys-158, Cys-149–Cys-166, Cys-168–Cys-179, Cys-182–Cys-194, and Cys-185–Cys-190. A helical transmembrane segment spans residues 211–233; that stretch reads VLLPLVIFFGLCLAFFLFVGLAC. Over 234–461 the chain is Cytoplasmic; the sequence is RYQRWKPKLY…RLAPAPHLLR (228 aa). Residues 340-350 form an N-SMase activation domain (NSD) region; sequence LPKWGGSAHSA. In terms of domain architecture, Death spans 362–447; sequence PATLYAVVDG…GCLEDIEEAL (86 aa).

Binding of TNF to the extracellular domain leads to homotrimerization. The aggregated death domains provide a novel molecular interface that interacts specifically with the death domain of TRADD. Various TRADD-interacting proteins such as TRAFS, RIPK1 and possibly FADD, are recruited to the complex by their association with TRADD. This complex activates at least two distinct signaling cascades, apoptosis and NF-kappa-B signaling. Interacts with BAG4, BABAM2, FEM1B, GRB2, SQSTM1 and TRPC4AP. Interacts with DAB2IP. Interacts directly with NOL3 (via CARD domain); inhibits TNF-signaling pathway. Interacts with SH3RF2, TRADD and RIPK1. SH3RF2 facilitates the recruitment of RIPK1 and TRADD to TNFRSF1A in a TNF-alpha-dependent process. Interacts with PGLYRP1; this interaction is important for cell death induction. Interacts (via death domain) with MADD (via death domain).

The protein localises to the cell membrane. It is found in the golgi apparatus membrane. Its function is as follows. Receptor for TNFSF2/TNF-alpha and homotrimeric TNFSF1/lymphotoxin-alpha. The adapter molecule FADD recruits caspase-8 to the activated receptor. The resulting death-inducing signaling complex (DISC) performs caspase-8 proteolytic activation which initiates the subsequent cascade of caspases (aspartate-specific cysteine proteases) mediating apoptosis. In Sus scrofa (Pig), this protein is Tumor necrosis factor receptor superfamily member 1A (TNFRSF1A).